The chain runs to 226 residues: Cytidylate kinase (226 aa).

14 to 22 (GPAGAGKST) is an ATP binding site.

The protein belongs to the cytidylate kinase family. Type 1 subfamily.

It localises to the cytoplasm. The catalysed reaction is CMP + ATP = CDP + ADP. It catalyses the reaction dCMP + ATP = dCDP + ADP. In Symbiobacterium thermophilum (strain DSM 24528 / JCM 14929 / IAM 14863 / T), this protein is Cytidylate kinase.